The following is a 280-amino-acid chain: Serine protease 33 (280 aa).

The signal sequence occupies residues 1–22 (MRGVSCLQVLLLLVLGAAGTQG). A Peptidase S1 domain is found at 37-279 (IVGGRDGRDG…YSPWIQARVS (243 aa)). Cys-62 and Cys-78 are disulfide-bonded. Catalysis depends on charge relay system residues His-77 and Asp-126. 3 cysteine pairs are disulfide-bonded: Cys-160–Cys-237, Cys-193–Cys-216, and Cys-227–Cys-255. Ser-231 serves as the catalytic Charge relay system.

Belongs to the peptidase S1 family. In terms of tissue distribution, predominantly expressed in macrophages. Present in the spleen, small and large intestine, lung and brain (at protein level). Highly expressed in peripheral leukocytes, ovary, retina, spleen and stomach. Moderately expressed in thymus, uterus and platelets, as well as some brain tissues, such as thalamus and fetal brain.

The protein localises to the secreted. Functionally, serine protease that has amidolytic activity, cleaving its substrates before Arg residues. The chain is Serine protease 33 (PRSS33) from Homo sapiens (Human).